The primary structure comprises 582 residues: Proline--tRNA ligase (582 aa).

Belongs to the class-II aminoacyl-tRNA synthetase family. ProS type 1 subfamily. As to quaternary structure, homodimer.

The protein localises to the cytoplasm. The enzyme catalyses tRNA(Pro) + L-proline + ATP = L-prolyl-tRNA(Pro) + AMP + diphosphate. Catalyzes the attachment of proline to tRNA(Pro) in a two-step reaction: proline is first activated by ATP to form Pro-AMP and then transferred to the acceptor end of tRNA(Pro). As ProRS can inadvertently accommodate and process non-cognate amino acids such as alanine and cysteine, to avoid such errors it has two additional distinct editing activities against alanine. One activity is designated as 'pretransfer' editing and involves the tRNA(Pro)-independent hydrolysis of activated Ala-AMP. The other activity is designated 'posttransfer' editing and involves deacylation of mischarged Ala-tRNA(Pro). The misacylated Cys-tRNA(Pro) is not edited by ProRS. This Mycobacterium avium (strain 104) protein is Proline--tRNA ligase.